A 932-amino-acid chain; its full sequence is 2-oxoglutarate dehydrogenase E1 component (932 aa).

Belongs to the alpha-ketoglutarate dehydrogenase family. Homodimer. Part of the 2-oxoglutarate dehydrogenase (OGDH) complex composed of E1 (2-oxoglutarate dehydrogenase), E2 (dihydrolipoamide succinyltransferase) and E3 (dihydrolipoamide dehydrogenase); the complex contains multiple copies of the three enzymatic components (E1, E2 and E3). Thiamine diphosphate serves as cofactor.

The enzyme catalyses N(6)-[(R)-lipoyl]-L-lysyl-[protein] + 2-oxoglutarate + H(+) = N(6)-[(R)-S(8)-succinyldihydrolipoyl]-L-lysyl-[protein] + CO2. E1 component of the 2-oxoglutarate dehydrogenase (OGDH) complex which catalyzes the decarboxylation of 2-oxoglutarate, the first step in the conversion of 2-oxoglutarate to succinyl-CoA and CO(2). In Staphylococcus aureus (strain JH9), this protein is 2-oxoglutarate dehydrogenase E1 component.